Reading from the N-terminus, the 149-residue chain is D-aminoacyl-tRNA deacylase (149 aa).

Residues 137–138 (GP) carry the Gly-cisPro motif, important for rejection of L-amino acids motif.

This sequence belongs to the DTD family. As to quaternary structure, homodimer.

It is found in the cytoplasm. It catalyses the reaction glycyl-tRNA(Ala) + H2O = tRNA(Ala) + glycine + H(+). It carries out the reaction a D-aminoacyl-tRNA + H2O = a tRNA + a D-alpha-amino acid + H(+). An aminoacyl-tRNA editing enzyme that deacylates mischarged D-aminoacyl-tRNAs. Also deacylates mischarged glycyl-tRNA(Ala), protecting cells against glycine mischarging by AlaRS. Acts via tRNA-based rather than protein-based catalysis; rejects L-amino acids rather than detecting D-amino acids in the active site. By recycling D-aminoacyl-tRNA to D-amino acids and free tRNA molecules, this enzyme counteracts the toxicity associated with the formation of D-aminoacyl-tRNA entities in vivo and helps enforce protein L-homochirality. This Syntrophomonas wolfei subsp. wolfei (strain DSM 2245B / Goettingen) protein is D-aminoacyl-tRNA deacylase.